The following is a 215-amino-acid chain: Phosphatidylserine decarboxylase proenzyme (215 aa).

The Schiff-base intermediate with substrate; via pyruvic acid role is filled by Ser-184. Pyruvic acid (Ser); by autocatalysis is present on Ser-184.

Belongs to the phosphatidylserine decarboxylase family. PSD-A subfamily. As to quaternary structure, heterodimer of a large membrane-associated beta subunit and a small pyruvoyl-containing alpha subunit. Pyruvate is required as a cofactor. Post-translationally, is synthesized initially as an inactive proenzyme. Formation of the active enzyme involves a self-maturation process in which the active site pyruvoyl group is generated from an internal serine residue via an autocatalytic post-translational modification. Two non-identical subunits are generated from the proenzyme in this reaction, and the pyruvate is formed at the N-terminus of the alpha chain, which is derived from the carboxyl end of the proenzyme. The post-translation cleavage follows an unusual pathway, termed non-hydrolytic serinolysis, in which the side chain hydroxyl group of the serine supplies its oxygen atom to form the C-terminus of the beta chain, while the remainder of the serine residue undergoes an oxidative deamination to produce ammonia and the pyruvoyl prosthetic group on the alpha chain.

It localises to the cell membrane. It catalyses the reaction a 1,2-diacyl-sn-glycero-3-phospho-L-serine + H(+) = a 1,2-diacyl-sn-glycero-3-phosphoethanolamine + CO2. It functions in the pathway phospholipid metabolism; phosphatidylethanolamine biosynthesis; phosphatidylethanolamine from CDP-diacylglycerol: step 2/2. Its function is as follows. Catalyzes the formation of phosphatidylethanolamine (PtdEtn) from phosphatidylserine (PtdSer). In Aromatoleum aromaticum (strain DSM 19018 / LMG 30748 / EbN1) (Azoarcus sp. (strain EbN1)), this protein is Phosphatidylserine decarboxylase proenzyme.